The following is a 243-amino-acid chain: Carboxy-S-adenosyl-L-methionine synthase (243 aa).

S-adenosyl-L-methionine-binding positions include tyrosine 39, 64–66 (GCS), asparagine 132, and arginine 199.

The protein belongs to the class I-like SAM-binding methyltransferase superfamily. Cx-SAM synthase family. As to quaternary structure, homodimer.

It carries out the reaction prephenate + S-adenosyl-L-methionine = carboxy-S-adenosyl-L-methionine + 3-phenylpyruvate + H2O. In terms of biological role, catalyzes the conversion of S-adenosyl-L-methionine (SAM) to carboxy-S-adenosyl-L-methionine (Cx-SAM). In Alteromonas mediterranea (strain DSM 17117 / CIP 110805 / LMG 28347 / Deep ecotype), this protein is Carboxy-S-adenosyl-L-methionine synthase.